The following is a 67-amino-acid chain: Large ribosomal subunit protein bL35 (67 aa).

It belongs to the bacterial ribosomal protein bL35 family.

This is Large ribosomal subunit protein bL35 from Methylorubrum extorquens (strain CM4 / NCIMB 13688) (Methylobacterium extorquens).